An 875-amino-acid polypeptide reads, in one-letter code: Alanine--tRNA ligase (875 aa).

His-564, His-568, Cys-666, and His-670 together coordinate Zn(2+).

This sequence belongs to the class-II aminoacyl-tRNA synthetase family. In terms of assembly, homotetramer. Zn(2+) serves as cofactor.

Its subcellular location is the cytoplasm. The catalysed reaction is tRNA(Ala) + L-alanine + ATP = L-alanyl-tRNA(Ala) + AMP + diphosphate. Its function is as follows. Catalyzes the attachment of alanine to tRNA(Ala) in a two-step reaction: alanine is first activated by ATP to form Ala-AMP and then transferred to the acceptor end of tRNA(Ala). Also edits incorrectly charged Ser-tRNA(Ala) and Gly-tRNA(Ala) via its editing domain. The chain is Alanine--tRNA ligase from Yersinia enterocolitica serotype O:8 / biotype 1B (strain NCTC 13174 / 8081).